An 86-amino-acid chain; its full sequence is RNA-binding protein Hfq (86 aa).

The Sm domain maps to 9-68 (DPYLNTLRKEKVPVSIYLVNGIKLQGSIESFDQFVVLLKNTVSQMVYKHAISTVVPARPV). Positions 66–86 (RPVRLPSPSDSEHGDSEPGNA) are disordered. The segment covering 75–86 (DSEHGDSEPGNA) has biased composition (basic and acidic residues).

The protein belongs to the Hfq family. In terms of assembly, homohexamer.

In terms of biological role, RNA chaperone that binds small regulatory RNA (sRNAs) and mRNAs to facilitate mRNA translational regulation in response to envelope stress, environmental stress and changes in metabolite concentrations. Also binds with high specificity to tRNAs. The chain is RNA-binding protein Hfq from Pseudomonas putida (strain W619).